The following is a 153-amino-acid chain: Peptidyl-prolyl cis-trans isomerase FKBP15-1 (153 aa).

Residues 1–25 (MMSSASAMKAVGFLLLLTILTLAYA) form the signal peptide. The region spanning 52–140 (GDKIKVHYRG…IFDTELVAVN (89 aa)) is the PPIase FKBP-type domain. A Prevents secretion from ER motif is present at residues 150–153 (KNEL).

It belongs to the FKBP-type PPIase family.

It localises to the endoplasmic reticulum lumen. It catalyses the reaction [protein]-peptidylproline (omega=180) = [protein]-peptidylproline (omega=0). Its function is as follows. PPIases accelerate the folding of proteins. It catalyzes the cis-trans isomerization of proline imidic peptide bonds in oligopeptides. The chain is Peptidyl-prolyl cis-trans isomerase FKBP15-1 (FKBP15-1) from Arabidopsis thaliana (Mouse-ear cress).